A 220-amino-acid chain; its full sequence is GTP cyclohydrolase 1 (220 aa).

Positions 109, 112, and 180 each coordinate Zn(2+).

The protein belongs to the GTP cyclohydrolase I family. As to quaternary structure, homomer.

The catalysed reaction is GTP + H2O = 7,8-dihydroneopterin 3'-triphosphate + formate + H(+). Its pathway is cofactor biosynthesis; 7,8-dihydroneopterin triphosphate biosynthesis; 7,8-dihydroneopterin triphosphate from GTP: step 1/1. The sequence is that of GTP cyclohydrolase 1 from Edwardsiella ictaluri (strain 93-146).